The following is a 448-amino-acid chain: UPF0210 protein Pisl_0759 (448 aa).

The protein belongs to the UPF0210 family.

The polypeptide is UPF0210 protein Pisl_0759 (Pyrobaculum islandicum (strain DSM 4184 / JCM 9189 / GEO3)).